Consider the following 242-residue polypeptide: MDIKLKDFEGPLDLLLHLVSKYQMDIYDVPITEVIEQYLAYVSTLQAMRLEVTGEYMVMASQLMLIKSRKLLPKVAEVTDLGDDLEQDLLSQIEEYRKFKLLGEHLEAKHQERAQYYSKAPTELIYEDAELVHDKTTIDLFLAFSNILAKKKEEFAQNHTTILRDEYKIEDMMIIVKESLIGRDQLRLQDLFKEAQNVQEVITLFLATLELIKTQELILVQEESFGDIYLMEKKEESQVPQS.

It belongs to the ScpA family. As to quaternary structure, component of a cohesin-like complex composed of ScpA, ScpB and the Smc homodimer, in which ScpA and ScpB bind to the head domain of Smc. The presence of the three proteins is required for the association of the complex with DNA.

It localises to the cytoplasm. In terms of biological role, participates in chromosomal partition during cell division. May act via the formation of a condensin-like complex containing Smc and ScpB that pull DNA away from mid-cell into both cell halves. The protein is Segregation and condensation protein A of Streptococcus pneumoniae serotype 2 (strain D39 / NCTC 7466).